Consider the following 104-residue polypeptide: Large ribosomal subunit protein bL21 (104 aa).

This sequence belongs to the bacterial ribosomal protein bL21 family. In terms of assembly, part of the 50S ribosomal subunit. Contacts protein L20.

Its function is as follows. This protein binds to 23S rRNA in the presence of protein L20. The sequence is that of Large ribosomal subunit protein bL21 from Endomicrobium trichonymphae.